We begin with the raw amino-acid sequence, 89 residues long: DNA/RNA-binding protein Alba (89 aa).

The protein belongs to the histone-like Alba family.

The protein resides in the cytoplasm. Its subcellular location is the chromosome. Its function is as follows. Binds double-stranded DNA tightly but without sequence specificity. Involved in DNA compaction. The sequence is that of DNA/RNA-binding protein Alba from Methanococcus maripaludis (strain DSM 14266 / JCM 13030 / NBRC 101832 / S2 / LL).